Consider the following 427-residue polypeptide: Lactadherin (427 aa).

An N-terminal signal peptide occupies residues 1–22 (MQFSRVLAALCGVLLCASGLFA). EGF-like domains follow at residues 24–61 (SGDF…LVCN) and 64–108 (EKGP…IHCE). 3 disulfide bridges follow: cysteine 28–cysteine 39, cysteine 33–cysteine 49, and cysteine 51–cysteine 60. N-linked (GlcNAc...) asparagine glycosylation is present at asparagine 61. Disulfide bonds link cysteine 68-cysteine 79, cysteine 73-cysteine 96, cysteine 98-cysteine 107, cysteine 111-cysteine 267, cysteine 254-cysteine 258, and cysteine 272-cysteine 427. The Cell attachment site signature appears at 87–89 (RGD). F5/8 type C domains follow at residues 111–267 (CSTK…LLGC) and 272–427 (CSEP…LLGC). An N-linked (GlcNAc...) asparagine glycan is attached at asparagine 230. 2 N-linked (GlcNAc...) asparagine glycosylation sites follow: asparagine 280 and asparagine 390.

Spleen, lung, heart, brain and muscle.

The protein localises to the membrane. Its subcellular location is the secreted. It is found in the cytoplasmic vesicle. It localises to the secretory vesicle. The protein resides in the acrosome membrane. Functionally, contributes to phagocytic removal of apoptotic cells in many tissues. Plays an important role in the maintenance of intestinal epithelial homeostasis and the promotion of mucosal healing. Promotes VEGF-dependent neovascularization. Specific ligand for the alpha-v/beta-3 and alpha-v/beta-5 receptors. Also binds to phosphatidylserine-enriched cell surfaces in a receptor-independent manner. Zona pellucida-binding protein which may play a role in gamete interaction. Appears to participate in the O-acetylation of GD3 ganglioside sialic acid. The sequence is that of Lactadherin (Mfge8) from Rattus norvegicus (Rat).